Consider the following 1202-residue polypeptide: MANLLQRLRRRTGPKPDYIEDKLDEYIREEQVEETGGSNQDCPLGEIEKILDREWRPTASNNPNSSDNGTPTLVVVKQYLVKWKGLSYLHCSWVPEQEFEKAYKSHPHLKLKLRVTRFNAAMDVFIAENGAHEFIAIRPEWKTVDRIIACREGDDGEEYLVKYKELSYRNSYWESESDISDFQNEIQRFKDINSSSRRDKYVENERNREEFKQFDLTPEFLTGTLHTYQLEGLNFLRYSWSKKTNVILADEMGLGKTIQSIAFLASLFEENLSPHLVVAPLSTIRNWEREFATWAPHMNVVMYTGDSEARDVIWEHEFYFSEGRKSKFDVLLTTYEMVHPGISVLSPIKWTCMIIDEGHRLKNQKSKLYSSLSQFTSKHIVLLTGTPLQNNLNELFALMHFLDADKFGSLEKFQDINKEEQISRLHQMLAPHLLRRLKKDVLKDKVPPKKELILRVDMSSQQKEVYKAVITNNYQVLTKKRDAKISNVLMKLRQVCSHPYLLPDFEPRFEDANEAFTKLLEASGKLQLLDKMMVKLKEQGHRVLIYTQFQHTLYLLEDYFTFKNWNYERIDGKISGPERQVRIDRFNAENSNRFCFLLSTRAGGIGINLATADTVIIYDSDWNPHADLQAMARVHRLGQTNKVMIYRLIHKGTVEERMMEITKNKMLLEHLVVGKQHLCQDELDDIIKYGSKELFSEENDEAGRSGKIHYDDAAIEQLLDRNHVDAVEVSLDDEEETDFLKNFKVASFEYVDDENEAAALEEAQAIENNSSVRNADRTSHWKDLLKDKYEVQQAEELSALGKRKRNGKQVMYAEDDLDGLEEISDEEDEYCLDDLKVTSDEEEEADEPEAARQRKPRTVTRPYRKRARDNSEEIPLMEGEGRYLMVLGFNETERDIFLRTFKRYGAGNFDWKEFVNPLYMKTYDEINKYGILFLKHIAENPTDNSTNFKVITAMVYADGVPKEGISSDELLVSMTFMMLVKEKCQFLDNHPTAPVFSNYVISKYNLRNGAFSKEEHDRILIPAVSKHGYGRWVAIVEDEEIGFQEVACKDLNIPFPPDTKSARKRICDHVGKRVKKMEDAIKYEYAEKILAEQAKAETKGTSFVDAEKEMLKNDPITSKKNSATAVDNKQGRVEMAQSYDQSVNEKSGESFQTYLDIQPLNRMPRESFKPLEPINEEISTRLSVGTDHDVEMDAADNIIVLD.

Chromo domains lie at 45–109 (GEIE…HPHL) and 142–201 (KTVD…RDKY). A Helicase ATP-binding domain is found at 237 to 405 (RYSWSKKTNV…FALMHFLDAD (169 aa)). Residue 250–257 (DEMGLGKT) coordinates ATP. The short motif at 356 to 359 (DEGH) is the DEAH box element. The Helicase C-terminal domain maps to 528 to 679 (LLDKMMVKLK…HLVVGKQHLC (152 aa)). A disordered region spans residues 838-872 (TSDEEEEADEPEAARQRKPRTVTRPYRKRARDNSE). A compositionally biased stretch (basic residues) spans 853-867 (QRKPRTVTRPYRKRA).

Belongs to the SNF2/RAD54 helicase family.

Its subcellular location is the nucleus. Functionally, chromatin remodeling factor that represses the expression of embryonic trait genes upon and after seed germination and thus enables the developmental switch to post-germinative growth. This chain is CHD3-type chromatin-remodeling factor CHR7, found in Arabidopsis thaliana (Mouse-ear cress).